Consider the following 290-residue polypeptide: PIH1 domain-containing protein 1 (290 aa).

Over residues 34–50 the composition is skewed to polar residues; the sequence is ELQQAQTSRPESTQIQP. A disordered region spans residues 34–53; the sequence is ELQQAQTSRPESTQIQPQPG. Serine 173 carries the phosphoserine modification.

This sequence belongs to the PIH1 family. In terms of assembly, component of the R2TP complex composed at least of RUVBL1, RUVBL2, RPAP3 and PIHD1. Component of the PAQosome complex which is responsible for the biogenesis of several protein complexes and which consists of R2TP complex members RUVBL1, RUVBL2, RPAP3 and PIH1D1, URI complex members PFDN2, PFDN6, PDRG1, UXT and URI1 as well as ASDURF, POLR2E and DNAAF10/WDR92. Interacts with phosphorylated TELO2 and mediates interaction of TELO2 with the R2TP complex. Interacts with phosphorylated ECD, EFTUD2/SNRP116, RPB1 and UBR5 and with RPB1 in a phosphorylation-independent manner. Interacts with the core C/D box snoRNP particle components NOP58 and FBL and with RUVBL1/TIP49. Interacts with RPAP3 and DNAAF10. Interacts with histone H4 and with SWI/SNF complex member SMARCB1/SNF5. Interacts with the mTORC1 complex member RPTOR. Interacts with MSL1.

Its subcellular location is the nucleus. Functionally, involved in the assembly of C/D box small nucleolar ribonucleoprotein (snoRNP) particles. Recruits the SWI/SNF complex to the core promoter of rRNA genes and enhances pre-rRNA transcription. Mediates interaction of TELO2 with the R2TP complex which is necessary for the stability of MTOR and SMG1. Positively regulates the assembly and activity of the mTORC1 complex. This Bos taurus (Bovine) protein is PIH1 domain-containing protein 1 (PIH1D1).